We begin with the raw amino-acid sequence, 201 residues long: Large ribosomal subunit protein uL4 (201 aa).

Positions 39-72 (RRGTASTKTRAQVSKSGKKMYSQKGTGNARHGDR) are disordered. Residues 42–53 (TASTKTRAQVSK) show a composition bias toward polar residues.

Belongs to the universal ribosomal protein uL4 family. Part of the 50S ribosomal subunit.

Functionally, one of the primary rRNA binding proteins, this protein initially binds near the 5'-end of the 23S rRNA. It is important during the early stages of 50S assembly. It makes multiple contacts with different domains of the 23S rRNA in the assembled 50S subunit and ribosome. In terms of biological role, forms part of the polypeptide exit tunnel. This Deinococcus deserti (strain DSM 17065 / CIP 109153 / LMG 22923 / VCD115) protein is Large ribosomal subunit protein uL4.